A 212-amino-acid polypeptide reads, in one-letter code: Thymidylate kinase (212 aa).

An ATP-binding site is contributed by 11-18 (GPDGAGKT).

The protein belongs to the thymidylate kinase family.

The catalysed reaction is dTMP + ATP = dTDP + ADP. In terms of biological role, phosphorylation of dTMP to form dTDP in both de novo and salvage pathways of dTTP synthesis. The protein is Thymidylate kinase of Streptococcus mutans serotype c (strain ATCC 700610 / UA159).